We begin with the raw amino-acid sequence, 334 residues long: MGPVTGMTPDKNIETPAAEKVPGLSQTENMGSLPEEVGAARPKASMVDSGTTDEELTNLNWLHESTNLLNNFSLGSEGVPTGSPLYDIEGDLSPSGCQTPEKLSASSKPPYSFSLLIYMAIEHSPNKCLPVKDIYSWILDRFPYFATAPTGWKNSVRHNLSLNKYFQKVERSHGKVNGKGSLWCVDPEYKPSLIQALKKQPFSSALALYTPPTSPTSVSSRSSVSSLSSVEEVYEFIPKNSRAGSDGSEGFHSEDDTDIDYEEDMLGDSGYVSQPCINPSSNDLHGNKLRKEACQDIDDELKEAAGSLLHLAGIRTCLDSLLKTAKAQSQKHRK.

Disordered regions lie at residues 1-52 and 83-108; these read MGPV…SGTT and SPLYDIEGDLSPSGCQTPEKLSASSK. Residues 108–204 constitute a DNA-binding region (fork-head); the sequence is KPPYSFSLLI…QALKKQPFSS (97 aa).

It localises to the nucleus. In Xenopus tropicalis (Western clawed frog), this protein is Forkhead box protein N2.